A 704-amino-acid chain; its full sequence is PHD finger protein MALE MEIOCYTE DEATH 1 (704 aa).

The segment at 606 to 656 (MVKCICRARDDDGERMISCDVCEVWQHTRCCGIDDSDTLPPLFVCSNCCEE) adopts a PHD-type zinc-finger fold. Cysteine 609, cysteine 611, cysteine 624, cysteine 627, histidine 632, cysteine 635, cysteine 650, and cysteine 653 together coordinate Zn(2+).

Interacts with JMJ16 in the nucleus of male meiocytes, especially on pachytene chromosomes. As to expression, expressed in inflorescence, specifically in male meiocytes.

The protein resides in the nucleus. Functionally, probable transcription factor required for chromosome organization and progression during male meiosis (e.g. microsporogenesis). Necessary for fertility and meiotic progressive compaction of prophase I chromosomes to metaphase I bivalents. Together with JMJ16, promotes gene expression in male meiocytes in an H3K9me3-dependent manner, and contributes to meiotic chromosome condensation by triggering some condensin promoters (e.g. CAP-D3 and CAP-H). This Arabidopsis thaliana (Mouse-ear cress) protein is PHD finger protein MALE MEIOCYTE DEATH 1.